The sequence spans 370 residues: 1-propanol dehydrogenase PduQ (370 aa).

Belongs to the iron-containing alcohol dehydrogenase family. Interacts with PduP, probably via the N-terminus of PduQ. Fe cation serves as cofactor.

Its subcellular location is the bacterial microcompartment. The catalysed reaction is 1-propanol + NAD(+) = propanal + NADH + H(+). The protein operates within polyol metabolism; 1,2-propanediol degradation. Its activity is regulated as follows. Enzyme is oxygen sensitive. Functionally, an iron-dependent alcohol dehydrogenase required for optimal 1,2-propanediol (1,2-PD) degradation. NAD(+) and NADH are regenerated internally within the bacterial microcompartment (BMC) dedicated to 1,2-PD degradation by the PduP and PduQ enzymes, which reduce NAD(+) and oxidize NADH respectively, although there must also be cofactor transport across the BMC. Its function is as follows. The 1,2-PD-specific bacterial microcompartment (BMC) concentrates low levels of 1,2-PD catabolic enzymes, concentrates volatile reaction intermediates thus enhancing pathway flux and keeps the level of toxic, mutagenic propionaldehyde low. In Salmonella typhimurium (strain LT2 / SGSC1412 / ATCC 700720), this protein is 1-propanol dehydrogenase PduQ.